The following is a 1062-amino-acid chain: Carbamoyl phosphate synthase pyrimidine-specific large chain (1062 aa).

A carboxyphosphate synthetic domain region spans residues 1–401 (MGKREDIKKI…SLLKAVRSLE (401 aa)). Positions 129, 169, 175, 176, 208, 210, 215, 241, 242, 243, 284, and 298 each coordinate ATP. The 195-residue stretch at 133-327 (RALMKELNEP…IAKIAAKIAV (195 aa)) folds into the ATP-grasp 1 domain. Residues glutamine 284, glutamate 298, and asparagine 300 each contribute to the Mg(2+) site. Mn(2+) is bound by residues glutamine 284, glutamate 298, and asparagine 300. Positions 402–546 (AGVYHLDQPD…YGTYEEENES (145 aa)) are oligomerization domain. A carbamoyl phosphate synthetic domain region spans residues 547-929 (ERTDKKSILV…ALYKGLIASG (383 aa)). Positions 671–861 (EQTLVELNIP…MANVATKVML (191 aa)) constitute an ATP-grasp 2 domain. 10 residues coordinate ATP: arginine 707, arginine 746, leucine 748, glutamate 752, glycine 777, valine 778, histidine 779, serine 780, glutamine 820, and glutamate 832. Residues glutamine 820, glutamate 832, and asparagine 834 each coordinate Mg(2+). 3 residues coordinate Mn(2+): glutamine 820, glutamate 832, and asparagine 834. The MGS-like domain maps to 930–1062 (MSIPTHGSVL…FSAESMPVMQ (133 aa)). The segment at 930–1062 (MSIPTHGSVL…FSAESMPVMQ (133 aa)) is allosteric domain.

It belongs to the CarB family. In terms of assembly, composed of two chains; the small (or glutamine) chain promotes the hydrolysis of glutamine to ammonia, which is used by the large (or ammonia) chain to synthesize carbamoyl phosphate. Tetramer of heterodimers (alpha,beta)4. Requires Mg(2+) as cofactor. It depends on Mn(2+) as a cofactor.

The enzyme catalyses hydrogencarbonate + L-glutamine + 2 ATP + H2O = carbamoyl phosphate + L-glutamate + 2 ADP + phosphate + 2 H(+). The catalysed reaction is hydrogencarbonate + NH4(+) + 2 ATP = carbamoyl phosphate + 2 ADP + phosphate + 2 H(+). The protein operates within amino-acid biosynthesis; L-arginine biosynthesis; carbamoyl phosphate from bicarbonate: step 1/1. Its pathway is pyrimidine metabolism; UMP biosynthesis via de novo pathway; (S)-dihydroorotate from bicarbonate: step 1/3. In terms of biological role, small subunit of the glutamine-dependent carbamoyl phosphate synthetase (CPSase). CPSase catalyzes the formation of carbamoyl phosphate from the ammonia moiety of glutamine, carbonate, and phosphate donated by ATP, constituting the first step of the biosynthetic pathway leading to pyrimidine nucleotides. The large subunit (synthetase) binds the substrates ammonia (free or transferred from glutamine from the small subunit), hydrogencarbonate and ATP and carries out an ATP-coupled ligase reaction, activating hydrogencarbonate by forming carboxy phosphate which reacts with ammonia to form carbamoyl phosphate. This is Carbamoyl phosphate synthase pyrimidine-specific large chain (pyrAB) from Halalkalibacterium halodurans (strain ATCC BAA-125 / DSM 18197 / FERM 7344 / JCM 9153 / C-125) (Bacillus halodurans).